Consider the following 387-residue polypeptide: uncharacterized protein (387 aa).

The interval 1 to 23 (MSSLPRNAVARNSKMHKKRDSGV) is disordered. Residues 98–129 (KIARDLKKRQEDYEKTKLEVERLKRSEELANK) are a coiled coil. Residues 146–255 (ENNTVEPNNE…NKKKKKEKNK (110 aa)) form a disordered region. Composition is skewed to low complexity over residues 162–175 (EQIT…TTEQ) and 182–194 (EQTT…QTAE). Residues 204–213 (TVEKSGDQST) show a composition bias toward basic and acidic residues. Polar residues predominate over residues 214–231 (EKTTQQTAEESVEQSTEQ).

This is an uncharacterized protein from Acanthamoeba polyphaga mimivirus (APMV).